The sequence spans 119 residues: Defensin-like protein 260 (119 aa).

A signal peptide spans 1–24; that stretch reads MKIASLKLLLLVSLLFAVTQNGIS. 4 disulfides stabilise this stretch: cysteine 44/cysteine 99, cysteine 63/cysteine 79, cysteine 69/cysteine 83, and cysteine 73/cysteine 85.

This sequence belongs to the DEFL family.

It is found in the secreted. The protein is Defensin-like protein 260 of Arabidopsis thaliana (Mouse-ear cress).